A 150-amino-acid polypeptide reads, in one-letter code: Large ribosomal subunit protein bL9 (150 aa).

This sequence belongs to the bacterial ribosomal protein bL9 family.

Binds to the 23S rRNA. This chain is Large ribosomal subunit protein bL9, found in Wigglesworthia glossinidia brevipalpis.